A 213-amino-acid polypeptide reads, in one-letter code: Ribonuclease Oy (213 aa).

Residue His35 is part of the active site. An intrachain disulfide couples Cys51 to Cys96. Asn52 carries an N-linked (GlcNAc...) asparagine glycan. Residues Glu89 and His93 contribute to the active site. 2 N-linked (GlcNAc...) asparagine glycosylation sites follow: Asn121 and Asn142. Intrachain disulfides connect Cys160/Cys198 and Cys178/Cys188.

It belongs to the RNase T2 family.

The protein resides in the secreted. In terms of biological role, releases mononucleotides from RNA in the order of 3'-GMP, 3'-AMP and 3'-UMP. This chain is Ribonuclease Oy, found in Magallana gigas (Pacific oyster).